The chain runs to 161 residues: Protein-export protein SecB (161 aa).

It belongs to the SecB family. In terms of assembly, homotetramer, a dimer of dimers. One homotetramer interacts with 1 SecA dimer.

Its subcellular location is the cytoplasm. One of the proteins required for the normal export of preproteins out of the cell cytoplasm. It is a molecular chaperone that binds to a subset of precursor proteins, maintaining them in a translocation-competent state. It also specifically binds to its receptor SecA. In Pseudomonas putida (strain ATCC 700007 / DSM 6899 / JCM 31910 / BCRC 17059 / LMG 24140 / F1), this protein is Protein-export protein SecB.